The chain runs to 437 residues: Transmembrane protein with metallophosphoesterase domain (437 aa).

Transmembrane regions (helical) follow at residues 7 to 27 (LSAE…MLIS), 41 to 61 (ALLF…LGSL), 87 to 107 (IIVL…FFLV), 116 to 136 (LLSF…FVFG), and 164 to 184 (VLAL…AAQP). D211, H213, D243, N274, H376, and H378 together coordinate a divalent metal cation.

It belongs to the metallophosphoesterase superfamily. LOC643853 family. The cofactor is a divalent metal cation.

The protein localises to the membrane. This chain is Transmembrane protein with metallophosphoesterase domain (tmppe), found in Danio rerio (Zebrafish).